We begin with the raw amino-acid sequence, 147 residues long: Small ribosomal subunit protein uS12 (147 aa).

The segment at 1–22 (MPTINQLVRKPRKSKIEKSDSP) is disordered. The residue at position 102 (Asp-102) is a 3-methylthioaspartic acid.

Belongs to the universal ribosomal protein uS12 family. As to quaternary structure, part of the 30S ribosomal subunit. Contacts proteins S8 and S17. May interact with IF1 in the 30S initiation complex.

With S4 and S5 plays an important role in translational accuracy. Its function is as follows. Interacts with and stabilizes bases of the 16S rRNA that are involved in tRNA selection in the A site and with the mRNA backbone. Located at the interface of the 30S and 50S subunits, it traverses the body of the 30S subunit contacting proteins on the other side and probably holding the rRNA structure together. The combined cluster of proteins S8, S12 and S17 appears to hold together the shoulder and platform of the 30S subunit. The polypeptide is Small ribosomal subunit protein uS12 (Streptococcus pyogenes serotype M12 (strain MGAS2096)).